Here is a 556-residue protein sequence, read N- to C-terminus: Formate--tetrahydrofolate ligase (556 aa).

Residue 65-72 (TPAGEGKT) coordinates ATP.

Belongs to the formate--tetrahydrofolate ligase family.

The enzyme catalyses (6S)-5,6,7,8-tetrahydrofolate + formate + ATP = (6R)-10-formyltetrahydrofolate + ADP + phosphate. It functions in the pathway one-carbon metabolism; tetrahydrofolate interconversion. The polypeptide is Formate--tetrahydrofolate ligase (Agathobacter rectalis (strain ATCC 33656 / DSM 3377 / JCM 17463 / KCTC 5835 / VPI 0990) (Eubacterium rectale)).